The following is a 312-amino-acid chain: Short chain dehydrogenase pgmD (312 aa).

NADP(+) is bound by residues valine 46, isoleucine 47, lysine 171, tyrosine 207, lysine 211, and threonine 242. Tyrosine 207 (proton donor) is an active-site residue. The Lowers pKa of active site Tyr role is filled by lysine 211.

This sequence belongs to the short-chain dehydrogenases/reductases (SDR) family.

Its pathway is pigment biosynthesis. It functions in the pathway secondary metabolite biosynthesis. Functionally, short chain dehydrogenase; part of the gene cluster that mediates the biosynthesis of pleosporalin A, ascomycone A, as well as a third cryptic naphthoquinone derived pigment, all responsible for the coloration of conidia. Essential for the production of pleosporalin A, but not the 2 other final products. The pathway begins with the biosynthesis of the cyclized heptaketide 3-acetonyl-1,6,8-trihydroxy-2-naphthaldehyde by the NR-PKS pgmA. The C-6 hydroxyl group is further methylated by the O-methyltransferase pgmB to yield fusarubinaldehyde which is in turn oxidized by the cytochrome P450 monooxygenase pgmC at C-9. The C-1 hydroxyl group is then methylated spontaneously. Although pgmE, pgmD and pgmH are essential for the production of pleosporalin A, it is not the case for the 2 other final products and it remains difficult to assign a specific function to each enzyme. PgmF and pgmG seem not to be involved in pigment biosynthesis although they were regulated by the cluster-specific transcription factor pgmR. In Aspergillus terreus (strain NIH 2624 / FGSC A1156), this protein is Short chain dehydrogenase pgmD.